A 337-amino-acid chain; its full sequence is Protein ABHD13 (337 aa).

A helical; Signal-anchor for type II membrane protein membrane pass occupies residues 37-57 (FHLYGGIVLLLLIFVSIAGIL). Residues Ser193, Asp268, and His298 each act as charge relay system in the active site. Asn299 carries N-linked (GlcNAc...) asparagine glycosylation.

The protein belongs to the serine esterase family.

It localises to the membrane. This is Protein ABHD13 from Mus musculus (Mouse).